Reading from the N-terminus, the 493-residue chain is NADH-quinone oxidoreductase subunit M (493 aa).

14 helical membrane-spanning segments follow: residues 5–25 (PIIS…LLFI), 37–57 (VMYV…YILI), 89–109 (ISIL…IGSL), 115–135 (YIKE…GAFT), 139–159 (LLLF…IIGV), 172–192 (FFLY…YIYS), 216–236 (ILWW…PFHT), 251–271 (VILA…VLLP), 280–300 (FAIY…LVAL), 308–328 (MIAY…FSFT), 334–354 (GAIF…LIVG), 375–395 (MPVL…LPGT), 411–431 (VNVV…VYML), and 458–478 (IISI…PSSI).

It belongs to the complex I subunit 4 family.

It localises to the cell membrane. It carries out the reaction a quinone + NADH + 5 H(+)(in) = a quinol + NAD(+) + 4 H(+)(out). Functionally, NDH-1 shuttles electrons from NADH, via FMN and iron-sulfur (Fe-S) centers, to quinones in the respiratory chain. Couples the redox reaction to proton translocation (for every two electrons transferred, four hydrogen ions are translocated across the cytoplasmic membrane), and thus conserves the redox energy in a proton gradient. The chain is NADH-quinone oxidoreductase subunit M (nuoM) from Rickettsia conorii (strain ATCC VR-613 / Malish 7).